A 181-amino-acid polypeptide reads, in one-letter code: Oligoribonuclease (181 aa).

The 164-residue stretch at 8–171 folds into the Exonuclease domain; it reads LIWVDLEMTG…DDIRESIAEL (164 aa). Residue tyrosine 129 is part of the active site.

This sequence belongs to the oligoribonuclease family.

The protein localises to the cytoplasm. Functionally, 3'-to-5' exoribonuclease specific for small oligoribonucleotides. In Vibrio parahaemolyticus serotype O3:K6 (strain RIMD 2210633), this protein is Oligoribonuclease.